Here is a 310-residue protein sequence, read N- to C-terminus: Chromatin modification-related protein EAF3 (310 aa).

Residues 8-80 (KCLCYHGPLL…DEWVGQERIR (73 aa)) form the Tudor-knot domain. A disordered region spans residues 104–128 (AKRAKARPGKRERSPAPAAPAAPAQ). Residues 118–127 (PAPAAPAAPA) are compositionally biased toward low complexity. In terms of domain architecture, MRG spans 128 to 308 (QGPRLAVRMP…TSAQYEGVAL (181 aa)).

Belongs to the MRG family. As to quaternary structure, component of the NuA4 histone acetyltransferase complex.

It is found in the nucleus. Functionally, involved in deacetylation of histones, chromatin assembly and chromosome segregation. May act as a transcriptional oscillator, directing histone deacetylases to specific chromosomal domains. Component of the NuA4 histone acetyltransferase complex which is involved in transcriptional activation of selected genes principally by acetylation of nucleosomal histone H4 and H2A. The NuA4 complex is also involved in DNA repair. This chain is Chromatin modification-related protein EAF3 (EAF3), found in Eremothecium gossypii (strain ATCC 10895 / CBS 109.51 / FGSC 9923 / NRRL Y-1056) (Yeast).